Reading from the N-terminus, the 540-residue chain is Protein dml-1 (540 aa).

The tract at residues 517–540 (NELAEMADEYHEGWSSGSDDGDDD) is disordered.

The protein belongs to the misato family.

Its subcellular location is the mitochondrion. In terms of biological role, involved in the partitioning of the mitochondrial organelle and mitochondrial DNA (mtDNA) inheritance. The chain is Protein dml-1 (dml-1) from Neurospora crassa (strain ATCC 24698 / 74-OR23-1A / CBS 708.71 / DSM 1257 / FGSC 987).